Reading from the N-terminus, the 157-residue chain is Cyclic pyranopterin monophosphate synthase (157 aa).

Substrate contacts are provided by residues 74–76 and 112–113; these read MCH and ME. The active site involves Asp127.

The protein belongs to the MoaC family. In terms of assembly, homohexamer; trimer of dimers.

It carries out the reaction (8S)-3',8-cyclo-7,8-dihydroguanosine 5'-triphosphate = cyclic pyranopterin phosphate + diphosphate. Its pathway is cofactor biosynthesis; molybdopterin biosynthesis. In terms of biological role, catalyzes the conversion of (8S)-3',8-cyclo-7,8-dihydroguanosine 5'-triphosphate to cyclic pyranopterin monophosphate (cPMP). The chain is Cyclic pyranopterin monophosphate synthase from Campylobacter jejuni (strain RM1221).